The primary structure comprises 252 residues: N-acetylglucosaminyl-phosphatidylinositol de-N-acetylase (252 aa).

A helical transmembrane segment spans residues 2–22 (EVVGLLCVAVAVLTWGFLRVW). The Cytoplasmic segment spans residues 23-252 (NSAERMRSPE…YMSVNSLQLL (230 aa)).

Belongs to the PIGL family.

The protein localises to the endoplasmic reticulum membrane. The catalysed reaction is a 6-(N-acetyl-alpha-D-glucosaminyl)-1-(1,2-diacyl-sn-glycero-3-phospho)-1D-myo-inositol + H2O = a 6-(alpha-D-glucosaminyl)-1-(1,2-diacyl-sn-glycero-3-phospho)-1D-myo-inositol + acetate. It participates in glycolipid biosynthesis; glycosylphosphatidylinositol-anchor biosynthesis. Functionally, catalyzes the second step of glycosylphosphatidylinositol (GPI) biosynthesis, which is the de-N-acetylation of N-acetylglucosaminyl-phosphatidylinositol. The polypeptide is N-acetylglucosaminyl-phosphatidylinositol de-N-acetylase (Pigl) (Rattus norvegicus (Rat)).